We begin with the raw amino-acid sequence, 528 residues long: Putative ABC transporter ATP-binding protein MA_1418 (528 aa).

2 consecutive ABC transporter domains span residues 2 to 242 (IELR…TNLT) and 262 to 494 (ISVK…SDYK). ATP-binding positions include 36-43 (GHSAAGKT) and 294-301 (GENGSGKT).

The protein belongs to the ABC transporter superfamily.

The protein localises to the cell membrane. Functionally, probably part of an ABC transporter complex. Responsible for energy coupling to the transport system. The protein is Putative ABC transporter ATP-binding protein MA_1418 of Methanosarcina acetivorans (strain ATCC 35395 / DSM 2834 / JCM 12185 / C2A).